The sequence spans 486 residues: Malonate-semialdehyde dehydrogenase 1 (486 aa).

Positions 154, 178, 181, 182, and 231 each coordinate NAD(+). Catalysis depends on Cys286, which acts as the Nucleophile. NAD(+) is bound at residue Glu386.

It belongs to the aldehyde dehydrogenase family. IolA subfamily. Homotetramer.

The enzyme catalyses 3-oxopropanoate + NAD(+) + CoA + H2O = hydrogencarbonate + acetyl-CoA + NADH + H(+). It catalyses the reaction 2-methyl-3-oxopropanoate + NAD(+) + CoA + H2O = propanoyl-CoA + hydrogencarbonate + NADH + H(+). It functions in the pathway polyol metabolism; myo-inositol degradation into acetyl-CoA; acetyl-CoA from myo-inositol: step 7/7. Catalyzes the oxidation of malonate semialdehyde (MSA) and methylmalonate semialdehyde (MMSA) into acetyl-CoA and propanoyl-CoA, respectively. Is involved in a myo-inositol catabolic pathway. Bicarbonate, and not CO2, is the end-product of the enzymatic reaction. This Bacillus anthracis protein is Malonate-semialdehyde dehydrogenase 1.